Consider the following 274-residue polypeptide: 2,3,4,5-tetrahydropyridine-2,6-dicarboxylate N-succinyltransferase (274 aa).

Residues arginine 105 and aspartate 142 each coordinate substrate.

Belongs to the transferase hexapeptide repeat family. Homotrimer.

The protein localises to the cytoplasm. It carries out the reaction (S)-2,3,4,5-tetrahydrodipicolinate + succinyl-CoA + H2O = (S)-2-succinylamino-6-oxoheptanedioate + CoA. It participates in amino-acid biosynthesis; L-lysine biosynthesis via DAP pathway; LL-2,6-diaminopimelate from (S)-tetrahydrodipicolinate (succinylase route): step 1/3. In Methylobacillus flagellatus (strain ATCC 51484 / DSM 6875 / VKM B-1610 / KT), this protein is 2,3,4,5-tetrahydropyridine-2,6-dicarboxylate N-succinyltransferase.